Consider the following 256-residue polypeptide: MAFTLTNKNVIFVAGLGGIGLDTSKELVKRDLKNLVILDRIENPAAIAELQAINPKVTVTFYPYDVTVPIAETTKLLKTIFAKLKTVDVLINGAGILDDHQIERTIAVNYTGLVNTTTAILDFWDKRKGGPGGIICNIGSVTGFNAIYQVPVYSGTKAAVVNFTSSLAKLAPITGVTAYTVNPGITRTTLVHKFNSWLDVEPQVAEKLLAHPTQPSLACAENFVKAIELNQNGAIWKLDLSTLEAIQWTKHWDSGI.

Position 12-35 (12-35) interacts with NAD(+); sequence FVAGLGGIGLDTSKELVKRDLKNL. S140 lines the substrate pocket. Y153 (proton acceptor) is an active-site residue.

It belongs to the short-chain dehydrogenases/reductases (SDR) family. In terms of assembly, homodimer.

It catalyses the reaction a primary alcohol + NAD(+) = an aldehyde + NADH + H(+). It carries out the reaction a secondary alcohol + NAD(+) = a ketone + NADH + H(+). This chain is Alcohol dehydrogenase (Adh), found in Drosophila mauritiana (Fruit fly).